The sequence spans 277 residues: Large ribosomal subunit protein uL2 (277 aa).

Residues 219-277 (TVRGSVMNPNDHPHGGGEGKAPVGRKAPSTPWGKPALGLKTRNKKAKSDKLIVRRRNEK) form a disordered region. The segment covering 264–277 (AKSDKLIVRRRNEK) has biased composition (basic and acidic residues).

Belongs to the universal ribosomal protein uL2 family. As to quaternary structure, part of the 50S ribosomal subunit. Forms a bridge to the 30S subunit in the 70S ribosome.

Functionally, one of the primary rRNA binding proteins. Required for association of the 30S and 50S subunits to form the 70S ribosome, for tRNA binding and peptide bond formation. It has been suggested to have peptidyltransferase activity; this is somewhat controversial. Makes several contacts with the 16S rRNA in the 70S ribosome. The sequence is that of Large ribosomal subunit protein uL2 from Streptococcus pyogenes serotype M1.